Consider the following 134-residue polypeptide: Small ribosomal subunit protein uS8c (134 aa).

This sequence belongs to the universal ribosomal protein uS8 family. Part of the 30S ribosomal subunit.

It is found in the plastid. It localises to the chloroplast. One of the primary rRNA binding proteins, it binds directly to 16S rRNA central domain where it helps coordinate assembly of the platform of the 30S subunit. The polypeptide is Small ribosomal subunit protein uS8c (rps8) (Arabis hirsuta (Hairy rock-cress)).